An 855-amino-acid polypeptide reads, in one-letter code: MICAL-like protein 1 (855 aa).

The Calponin-homology (CH) domain occupies 2–108 (AGPRGALLAW…YVSQYYNHFT (107 aa)). Disordered stretches follow at residues 110–165 (SGQA…SSAC), 226–253 (GRSG…EDSD), and 269–659 (QASS…HGFP). A compositionally biased stretch (low complexity) spans 124-135 (PAAPSPTSTSPA). Positions 163–226 (SACAACGQRV…ERCTRLGLGG (64 aa)) constitute an LIM zinc-binding domain. Residues 269 to 278 (QASSEVQPHT) are compositionally biased toward polar residues. A phosphoserine mark is found at S293 and S307. Over residues 308–325 (ESSALTPPTPRPRSSLQQ) the composition is skewed to polar residues. 2 positions are modified to phosphothreonine: T313 and T316. The span at 356–367 (LSERMTAPRKDP) shows a compositional bias: basic and acidic residues. The NPF1 signature appears at 423-425 (NPF). The span at 425–434 (FEEEEEEEEA) shows a compositional bias: acidic residues. A compositionally biased stretch (pro residues) spans 439-449 (VPSPAPAPPET). Phosphothreonine is present on residues T461 and T463. Phosphoserine is present on residues S464, S465, S478, and S480. Positions 499–514 (PSPALSVESLSSESSS) are enriched in low complexity. The segment covering 542–554 (PGTSANSVTPSAH) has biased composition (polar residues). The span at 555–570 (SSLSSSGELGQPSGEQ) shows a compositional bias: low complexity. A Phosphoserine modification is found at S613. The NPF2 motif lies at 625–627 (NPF). The tract at residues 644–855 (KGAKPVRPPA…AKSKAPTGKS (212 aa)) is mediates the interaction with RAB13 and intramolecular interaction with the calponin-homology (CH) domain. The bMERB domain maps to 663 to 810 (RKVQADQYIP…EEEEDKMLET (148 aa)). Positions 679 to 703 (EMDSIERQLDALEHSGVLLEEKLRG) form a coiled coil. Phosphoserine occurs at positions 682 and 732. Positions 692–855 (HSGVLLEEKL…AKSKAPTGKS (164 aa)) are necessary and sufficient to associate with tubular recycling endosome membranes, mediate phosphatidic acid-binding and membrane tubulation. Residues 794–822 (LDEDRQREEEEDKMLETMIKKKDFQREAE) adopt a coiled-coil conformation. The span at 815 to 826 (KDFQREAESDSK) shows a compositional bias: basic and acidic residues. The segment at 815–855 (KDFQREAESDSKKKGKFKTMKVLKLLGNKRDAKSKAPTGKS) is disordered.

Homooligomer. Interacts (via NPF1 motif) with EHD1 (via EH domain); the interaction is direct and probably recruits EHD1 to membranes. Interacts with EHD3 (via EH domain). Interacts with RAB35 (GTP-bound form); the interaction is direct and probably recruits MICALL1 to membranes. Interacts with ACAP2; the interaction is indirect through RAB35. Interacts with RAB8A (GTP-bound form); regulates RAB8A association with recycling endosomes. Interacts with RAB13 (GTP-bound form). Interacts with ARF6 (GTP-bound form). Interacts with PACSIN2 (via the SH3 domain). Interacts with DPYSL2.

The protein resides in the recycling endosome membrane. The protein localises to the late endosome membrane. It localises to the cell projection. Its subcellular location is the cilium membrane. It is found in the cytoplasm. The protein resides in the cytoskeleton. The protein localises to the microtubule organizing center. It localises to the centrosome. Its subcellular location is the centriole. Lipid-binding protein with higher affinity for phosphatidic acid, a lipid enriched in recycling endosome membranes. On endosome membranes, acts as a downstream effector of Rab proteins recruiting cytosolic proteins to regulate membrane tubulation. Involved in a late step of receptor-mediated endocytosis regulating for instance endocytosed-EGF receptor trafficking. Alternatively, regulates slow endocytic recycling of endocytosed proteins back to the plasma membrane. Also involved in cargo protein delivery to the plasma membrane. Plays a role in ciliogenesis coordination, recruits EHD1 to primary cilium where it is anchored to the centriole through interaction with tubulins. May indirectly play a role in neurite outgrowth. The protein is MICAL-like protein 1 (Micall1) of Rattus norvegicus (Rat).